The primary structure comprises 236 residues: Leucyl/phenylalanyl-tRNA--protein transferase (236 aa).

Belongs to the L/F-transferase family.

It localises to the cytoplasm. It carries out the reaction N-terminal L-lysyl-[protein] + L-leucyl-tRNA(Leu) = N-terminal L-leucyl-L-lysyl-[protein] + tRNA(Leu) + H(+). It catalyses the reaction N-terminal L-arginyl-[protein] + L-leucyl-tRNA(Leu) = N-terminal L-leucyl-L-arginyl-[protein] + tRNA(Leu) + H(+). The enzyme catalyses L-phenylalanyl-tRNA(Phe) + an N-terminal L-alpha-aminoacyl-[protein] = an N-terminal L-phenylalanyl-L-alpha-aminoacyl-[protein] + tRNA(Phe). Functionally, functions in the N-end rule pathway of protein degradation where it conjugates Leu, Phe and, less efficiently, Met from aminoacyl-tRNAs to the N-termini of proteins containing an N-terminal arginine or lysine. This Shewanella halifaxensis (strain HAW-EB4) protein is Leucyl/phenylalanyl-tRNA--protein transferase.